Here is a 229-residue protein sequence, read N- to C-terminus: UPF0173 metal-dependent hydrolase Hbut_0886 (229 aa).

The protein belongs to the UPF0173 family.

The polypeptide is UPF0173 metal-dependent hydrolase Hbut_0886 (Hyperthermus butylicus (strain DSM 5456 / JCM 9403 / PLM1-5)).